A 572-amino-acid chain; its full sequence is BOS complex subunit ncln (572 aa).

The signal sequence occupies residues 1–35; sequence MFEEAGEVLENMLKVSFPLSLVLFLVLVCPLRAEA. The Extracellular portion of the chain corresponds to 36-530; sequence AHEFSVYRMQ…TMNAYRVKPA (495 aa). 3 N-linked (GlcNAc...) asparagine glycosylation sites follow: asparagine 108, asparagine 234, and asparagine 436. A helical transmembrane segment spans residues 531 to 551; sequence IFDLLLAVCIASYLGVLYLAI. Topologically, residues 552–572 are cytoplasmic; it reads QNFGLLYGFLRRVTAPRVKQH.

It belongs to the nicastrin family. In terms of assembly, component of the multi-pass translocon (MPT) complex.

The protein resides in the endoplasmic reticulum membrane. Its function is as follows. Component of the multi-pass translocon (MPT) complex that mediates insertion of multi-pass membrane proteins into the lipid bilayer of membranes. The MPT complex takes over after the SEC61 complex: following membrane insertion of the first few transmembrane segments of proteins by the SEC61 complex, the MPT complex occludes the lateral gate of the SEC61 complex to promote insertion of subsequent transmembrane regions. Antagonizes Nodal signaling and subsequent organization of axial structures during mesodermal patterning. Ectopic expression results in cyclopia, due to a defect in mesendoderm patterning. The polypeptide is BOS complex subunit ncln (ncln) (Danio rerio (Zebrafish)).